The chain runs to 30 residues: Fimbrial assembly protein, serogroup B1 (30 aa).

The protein is Fimbrial assembly protein, serogroup B1 (fimB) of Dichelobacter nodosus (Bacteroides nodosus).